The following is a 111-amino-acid chain: Nucleoid-associated protein CYB_2894 (111 aa).

Belongs to the YbaB/EbfC family. As to quaternary structure, homodimer.

The protein resides in the cytoplasm. The protein localises to the nucleoid. In terms of biological role, binds to DNA and alters its conformation. May be involved in regulation of gene expression, nucleoid organization and DNA protection. This is Nucleoid-associated protein CYB_2894 from Synechococcus sp. (strain JA-2-3B'a(2-13)) (Cyanobacteria bacterium Yellowstone B-Prime).